Here is a 221-residue protein sequence, read N- to C-terminus: uncharacterized protein (221 aa).

This is an uncharacterized protein from Sinorhizobium fredii (strain NBRC 101917 / NGR234).